The primary structure comprises 245 residues: Small ribosomal subunit protein uS2 (245 aa).

It belongs to the universal ribosomal protein uS2 family.

The chain is Small ribosomal subunit protein uS2 from Pseudomonas fluorescens (strain SBW25).